We begin with the raw amino-acid sequence, 199 residues long: uncharacterized protein (199 aa).

Helical transmembrane passes span 41 to 61 (LFIP…AFIC), 72 to 92 (SLIC…CSPW), 109 to 129 (TVWV…SIFV), and 145 to 165 (VTYS…LLNL).

It to M.pneumoniae MPN_037.

It is found in the cell membrane. This is an uncharacterized protein from Mycoplasma pneumoniae (strain ATCC 29342 / M129 / Subtype 1) (Mycoplasmoides pneumoniae).